Reading from the N-terminus, the 593-residue chain is NADH-quinone oxidoreductase subunit C/D (593 aa).

Positions methionine 1–glutamine 184 are NADH dehydrogenase I subunit C. The segment at aspartate 208 to arginine 593 is NADH dehydrogenase I subunit D.

This sequence in the N-terminal section; belongs to the complex I 30 kDa subunit family. In the C-terminal section; belongs to the complex I 49 kDa subunit family. As to quaternary structure, NDH-1 is composed of 13 different subunits. Subunits NuoB, CD, E, F, and G constitute the peripheral sector of the complex.

It is found in the cell inner membrane. The catalysed reaction is a quinone + NADH + 5 H(+)(in) = a quinol + NAD(+) + 4 H(+)(out). NDH-1 shuttles electrons from NADH, via FMN and iron-sulfur (Fe-S) centers, to quinones in the respiratory chain. The immediate electron acceptor for the enzyme in this species is believed to be ubiquinone. Couples the redox reaction to proton translocation (for every two electrons transferred, four hydrogen ions are translocated across the cytoplasmic membrane), and thus conserves the redox energy in a proton gradient. The polypeptide is NADH-quinone oxidoreductase subunit C/D (Pseudomonas aeruginosa (strain UCBPP-PA14)).